A 503-amino-acid polypeptide reads, in one-letter code: ESX-5 secretion system protein EccD5 (503 aa).

The next 11 helical transmembrane spans lie at 137 to 157 (IVAV…ATGV), 169 to 189 (LTTI…MLLL), 200 to 220 (VADI…AAAP), 224 to 244 (VGSP…ALAL), 250 to 270 (RLGI…AALA), 272 to 292 (MVAA…CVVA), 359 to 379 (FLSG…TSLC), 382 to 402 (HTGQ…FLLL), 413 to 433 (SITL…RYAL), 439 to 459 (LAVS…MAAA), and 480 to 500 (YLCL…YAAI).

Belongs to the EccD/Snm4 family. As to quaternary structure, part of the ESX-5 / type VII secretion system (T7SS), which is composed of cytosolic and membrane components. The ESX-5 membrane complex is composed of EccB5, EccC5, EccD5 and EccE5.

It is found in the cell inner membrane. Its function is as follows. Part of the ESX-5 specialized secretion system, which is responsible for the secretion of EsxN and a number of PE_PGRS and PPE proteins, including PPE41. The chain is ESX-5 secretion system protein EccD5 from Mycobacterium tuberculosis (strain CDC 1551 / Oshkosh).